Consider the following 1730-residue polypeptide: Nebulin-related-anchoring protein (1730 aa).

In terms of domain architecture, LIM zinc-binding spans 4–64 (QPCSRCGYGV…HAHNPKNNTF (61 aa)). 44 Nebulin repeats span residues 63–97 (TFTSVYHTPLNLNVRTFPEAISGIHDQEDGEQCKS), 156–166 (EYTEDYEQPRG), 175–202 (TPAYQRAKKANQLASQVEYKRGHDERIS), 203–237 (RFSTVVDTPELLRSKAGAQLQSDVRYTEDYEQQRG), 246–273 (TPAYQIAKRANELASDVRYHQQYQKEMR), 298–307 (YPEEYEEHRG), 316–343 (TPAYQNAKKAHELASDIKYRQDFNKMKG), 348–382 (HSLPAQDNLVLKQAQSVNKLVSEVEYKKDLESSRG), 389–417 (ETPQFRNVSKISKFTSDNKYKENYQNHMR), 419–453 (RYEGVGMDRRTLHAMKVGSLASNVAYKADYKHDIV), 487–521 (KYSSVTDTPQIVQAKINAQQLSHVNYRADYEKNKL), 522–556 (NYTLPQDVPQLVKAKTNAKLFSEVKYKEGWEKTKG), 558–592 (GFEMKLDAMSLLAAKASGELASNIKYKEEYEKTKG), 602–626 (LLHSLQIAKMSSEVEYKKGFEESKT), 627–661 (RFHLPMDMVNIRHAKKAQTLASDLDYRKKLHEYTV), 662–692 (LPEDMKTQWAKKAYGLQSELQYKADLAWMKG), 702–724 (NLEQAKKAGQLVSEKNYRQRVDE), 726–760 (KFTSVTDSSQMEHAKKSQELQSGVAYKAGNEQSVH), 761–795 (QYTISKDEPLFLQARANAANLSEKLYKSSWENQKA), 797–831 (GFELRLDSLTFLAAKAKRDLASEVKYKEDYERSRG), 844–869 (QMSHSLQMSKLQSELEYKKGFEDTKS), 870–896 (QCHVSLDMVHLVHARKAQHLATDVGYK), 901–935 (HFTALPTDMKVEWAKKAYGLQSDNQYRADVKWMKG), 945–963 (NVEQAKKAGELISEKKYRQ), 969–1003 (KFTSIKDTPEMVQARISYTQAVDRLYREQGENIKH), 1004–1038 (HYTPTADLPEVLLAKLNAMNISETRYKESWSKLRD), 1040–1074 (GYKLRLDALPFQAAKASGEIISDYKYKEAFEKMKG), 1078–1112 (GSRSLEDDISLAHSVYATSLQSDVNYKKGFEHSKA), 1113–1139 (QFHLPLDMAALVHAKKAQTLASNQDYK), 1144–1178 (QYTSLAEDLRLSCAKKAHKLQSENLYRSDLNFMRG), 1183–1206 (IPGTLEIEGRKKASELISESKYRQ), 1212–1246 (KYTAVTDTPNLLHAKFSNQITNERLYKAAGEDARH), 1247–1281 (EYTMTLGLPEFIRAKTNAANLSDARYKESWRNLRA), 1283–1317 (GYKLTIEALPFQAARASGDIASDFLYRHDFVKERG), 1321–1355 (GPQSVRDDPRIQHCRRMGQLQSELQYRRGATSSQA), 1356–1390 (QFHLPMDMVHLVHAKNAQALASDHDYRTQYHKFTA), 1391–1421 (LPEDLKMAWAKKAHALQSELRYKSDLIGMKG), 1429–1449 (SPQMESAKKAGELISETKYRK), 1455–1481 (KFTTVVDSPDLVHAKNSYMHCNERMYR), 1490–1524 (RYTLIPDHPDFTRARLNALHLSDKVYRNSWEQTRA), 1526–1560 (SYDFRLDAIPFQTARASREIASDFRYKEAFLRDRG), 1564–1598 (GYRSVDDDPRMKHFLNVGRLQSDNEYKKDFAKSRS), 1599–1626 (QFHSSTDQPGLLQAKRSQQLASDVHYRQ), and 1640–1664 (LRHAQKAHQLQSDVKYKSDLNLTRG). Ser-1081 bears the Phosphoserine mark. The disordered stretch occupies residues 1595–1620 (KSRSQFHSSTDQPGLLQAKRSQQLAS). A compositionally biased stretch (polar residues) spans 1596-1606 (SRSQFHSSTDQ).

Interacts with actin, alpha-actinin, KLHL41, TLN1 and VCL. Interacts with CSRP3. As to expression, expressed in cardiac and skeletal muscle.

Functionally, may be involved in anchoring the terminal actin filaments in the myofibril to the membrane and in transmitting tension from the myofibrils to the extracellular matrix. This Homo sapiens (Human) protein is Nebulin-related-anchoring protein.